Consider the following 347-residue polypeptide: Protein phosphatase 1 regulatory subunit 3G (347 aa).

A disordered region spans residues 1–77 (MDPSGEQLHR…ELQEYRRSRA (77 aa)). Over residues 13–22 (ASSSTSSGDP) the composition is skewed to polar residues. Residue Ser-81 is modified to Phosphoserine. The CBM21 domain occupies 200-339 (EERLRRQRVC…NNEGANYTLR (140 aa)). The interval 258–286 (DPESVEPLPPLQSGDSGSKAEDSEEGPGT) is disordered.

In terms of biological role, glycogen-targeting subunit for protein phosphatase 1 (PP1). Involved in the regulation of hepatic glycogenesis in a manner coupled to the fasting-feeding cycle and distinct from other glycogen-targeting subunits. In Mus musculus (Mouse), this protein is Protein phosphatase 1 regulatory subunit 3G (Ppp1r3g).